A 173-amino-acid chain; its full sequence is HAM34 protein (173 aa).

Residues Ala22 to Pro89 show a composition bias toward low complexity. A disordered region spans residues Ala22–His155. Positions Thr95 to Gly133 are enriched in polar residues. A compositionally biased stretch (low complexity) spans Thr134 to His155.

Germinating spores.

Its function is as follows. Could be a structural protein required for the infection process of B.lactucae. The polypeptide is HAM34 protein (HAM34) (Bremia lactucae (Lettuce downy mildew)).